Consider the following 109-residue polypeptide: UPF0235 protein MA_4097 (109 aa).

Belongs to the UPF0235 family.

This is UPF0235 protein MA_4097 from Methanosarcina acetivorans (strain ATCC 35395 / DSM 2834 / JCM 12185 / C2A).